The sequence spans 188 residues: dTTP/UTP pyrophosphatase (188 aa).

The active-site Proton acceptor is Asp-70.

Belongs to the Maf family. YhdE subfamily. Requires a divalent metal cation as cofactor.

It localises to the cytoplasm. The catalysed reaction is dTTP + H2O = dTMP + diphosphate + H(+). It carries out the reaction UTP + H2O = UMP + diphosphate + H(+). In terms of biological role, nucleoside triphosphate pyrophosphatase that hydrolyzes dTTP and UTP. May have a dual role in cell division arrest and in preventing the incorporation of modified nucleotides into cellular nucleic acids. The sequence is that of dTTP/UTP pyrophosphatase from Clostridium beijerinckii (strain ATCC 51743 / NCIMB 8052) (Clostridium acetobutylicum).